A 54-amino-acid polypeptide reads, in one-letter code: Metallothionein-2 (54 aa).

This sequence belongs to the metallothionein superfamily. Type 11 family.

In Yarrowia lipolytica (strain CLIB 122 / E 150) (Yeast), this protein is Metallothionein-2 (MTP2).